The chain runs to 141 residues: Putative nickel-responsive regulator (141 aa).

Ni(2+)-binding residues include His80, His91, His93, and Cys99.

Belongs to the transcriptional regulatory CopG/NikR family. Requires Ni(2+) as cofactor.

Transcriptional regulator. This is Putative nickel-responsive regulator from Methanococcus aeolicus (strain ATCC BAA-1280 / DSM 17508 / OCM 812 / Nankai-3).